We begin with the raw amino-acid sequence, 354 residues long: Kelch domain-containing protein 8B (354 aa).

8 Kelch repeats span residues 1–31, 32–79, 81–127, 128–175, 176–222, 224–281, 282–329, and 331–354; these read MSAG…HQDE, HLLV…VLGK, VLVV…ERDG, MVYA…LHGN, KIYV…MAEG, VFSL…SLGG, HIVA…QAGP, and LFVI…RDGV.

It localises to the cytoplasm. The protein resides in the midbody. In terms of biological role, involved in pinching off the separated nuclei at the cleavage furrow and in cytokinesis. Required for mitotic integrity and maintenance of chromosomal stability. Protects cells against mitotic errors, centrosomal amplification, micronucleus formation and aneuploidy. Plays a key role of midbody function involving abscission of the daughter cells during cytokinesis and appropriate chromosomal and nuclear segregation into the daughter cells. In Pongo abelii (Sumatran orangutan), this protein is Kelch domain-containing protein 8B (KLHDC8B).